The sequence spans 302 residues: Glycine--tRNA ligase alpha subunit (302 aa).

It belongs to the class-II aminoacyl-tRNA synthetase family. Tetramer of two alpha and two beta subunits.

Its subcellular location is the cytoplasm. The catalysed reaction is tRNA(Gly) + glycine + ATP = glycyl-tRNA(Gly) + AMP + diphosphate. The polypeptide is Glycine--tRNA ligase alpha subunit (Haemophilus influenzae (strain 86-028NP)).